The chain runs to 123 residues: UPF0102 protein SPO0400 (123 aa).

The protein belongs to the UPF0102 family.

This Ruegeria pomeroyi (strain ATCC 700808 / DSM 15171 / DSS-3) (Silicibacter pomeroyi) protein is UPF0102 protein SPO0400.